The primary structure comprises 142 residues: Two-component response regulator ARR22 (142 aa).

The Response regulatory domain occupies asparagine 23–phenylalanine 140. The residue at position 74 (aspartate 74) is a 4-aspartylphosphate.

The protein belongs to the ARR family. Type-A subfamily. Two-component system major event consists of a His-to-Asp phosphorelay between a sensor histidine kinase (HK) and a response regulator (RR). In plants, the His-to-Asp phosphorelay involves an additional intermediate named Histidine-containing phosphotransfer protein (HPt). This multistep phosphorelay consists of a His-Asp-His-Asp sequential transfer of a phosphate group between first a His and an Asp of the HK protein, followed by the transfer to a conserved His of the HPt protein and finally the transfer to an Asp in the receiver domain of the RR protein.

The protein resides in the nucleus. Functions as a response regulator involved in His-to-Asp phosphorelay signal transduction system. Phosphorylation of the Asp residue in the receiver domain activates the ability of the protein to promote the transcription of target genes. Type-A response regulators seem to act as negative regulators of the cytokinin signaling. This chain is Two-component response regulator ARR22 (ARR22), found in Arabidopsis thaliana (Mouse-ear cress).